The following is a 445-amino-acid chain: tRNA modification GTPase MnmE (445 aa).

Residues Arg-24, Glu-81, and Lys-121 each contribute to the (6S)-5-formyl-5,6,7,8-tetrahydrofolate site. The TrmE-type G domain occupies 218 to 369; that stretch reads GLTVVIAGPP…LLEALVGFAR (152 aa). GTP is bound by residues 228–233, 247–253, 272–275, and 350–352; these read NAGKST, SPHAGTT, DTAG, and SAR. The Mg(2+) site is built by Ser-232 and Thr-253. Lys-445 serves as a coordination point for (6S)-5-formyl-5,6,7,8-tetrahydrofolate.

This sequence belongs to the TRAFAC class TrmE-Era-EngA-EngB-Septin-like GTPase superfamily. TrmE GTPase family. As to quaternary structure, homodimer. Heterotetramer of two MnmE and two MnmG subunits. The cofactor is K(+).

It is found in the cytoplasm. Exhibits a very high intrinsic GTPase hydrolysis rate. Involved in the addition of a carboxymethylaminomethyl (cmnm) group at the wobble position (U34) of certain tRNAs, forming tRNA-cmnm(5)s(2)U34. This chain is tRNA modification GTPase MnmE, found in Bradyrhizobium sp. (strain BTAi1 / ATCC BAA-1182).